Reading from the N-terminus, the 220-residue chain is Probable GTP-binding protein EngB (220 aa).

The region spanning 26–200 (EGIEIAFAGR…RAKLDEWYAP (175 aa)) is the EngB-type G domain. GTP-binding positions include 34–41 (GRSNAGKS), 61–65 (GRTQL), 79–82 (DLPG), 146–149 (TKAD), and 179–181 (FSS). The Mg(2+) site is built by serine 41 and threonine 63.

This sequence belongs to the TRAFAC class TrmE-Era-EngA-EngB-Septin-like GTPase superfamily. EngB GTPase family. The cofactor is Mg(2+).

Its function is as follows. Necessary for normal cell division and for the maintenance of normal septation. This chain is Probable GTP-binding protein EngB, found in Vibrio cholerae serotype O1 (strain ATCC 39315 / El Tor Inaba N16961).